Reading from the N-terminus, the 305-residue chain is Acetyl-coenzyme A carboxylase carboxyl transferase subunit beta (305 aa).

Positions 29–298 (LWTKCESCDA…EMKLPLLESS (270 aa)) constitute a CoA carboxyltransferase N-terminal domain. Zn(2+)-binding residues include cysteine 33, cysteine 36, cysteine 52, and cysteine 55. A C4-type zinc finger spans residues 33 to 55 (CESCDALTYTKDLQANLMVCLQC).

It belongs to the AccD/PCCB family. In terms of assembly, acetyl-CoA carboxylase is a heterohexamer composed of biotin carboxyl carrier protein (AccB), biotin carboxylase (AccC) and two subunits each of ACCase subunit alpha (AccA) and ACCase subunit beta (AccD). The cofactor is Zn(2+).

Its subcellular location is the cytoplasm. The catalysed reaction is N(6)-carboxybiotinyl-L-lysyl-[protein] + acetyl-CoA = N(6)-biotinyl-L-lysyl-[protein] + malonyl-CoA. Its pathway is lipid metabolism; malonyl-CoA biosynthesis; malonyl-CoA from acetyl-CoA: step 1/1. In terms of biological role, component of the acetyl coenzyme A carboxylase (ACC) complex. Biotin carboxylase (BC) catalyzes the carboxylation of biotin on its carrier protein (BCCP) and then the CO(2) group is transferred by the transcarboxylase to acetyl-CoA to form malonyl-CoA. The protein is Acetyl-coenzyme A carboxylase carboxyl transferase subunit beta of Synechococcus sp. (strain ATCC 27144 / PCC 6301 / SAUG 1402/1) (Anacystis nidulans).